The chain runs to 365 residues: Probable caffeine synthase 4 (365 aa).

Tyr18 is a binding site for S-adenosyl-L-homocysteine. Thr25 contacts caffeine. The S-adenosyl-L-homocysteine site is built by Cys61, Asn66, Asp98, Leu99, Ser134, and Phe135. The caffeine site is built by Tyr152, His155, and Trp156. 4 residues coordinate Mg(2+): Asn173, Asp259, Phe261, and Asn262. Phe317 is a caffeine binding site.

Belongs to the methyltransferase superfamily. Type-7 methyltransferase family. Mg(2+) is required as a cofactor.

It participates in alkaloid biosynthesis. In terms of biological role, may be involved in the biosynthesis of caffeine. This is Probable caffeine synthase 4 from Camellia sinensis (Tea plant).